Reading from the N-terminus, the 372-residue chain is UDP-2-acetamido-2,6-beta-L-arabino-hexul-4-ose reductase (372 aa).

NAD(+) is bound by residues 7–30, Leu53, Tyr103, and Lys107; that span reads GANG…EVVP. Catalysis depends on Tyr103, which acts as the Proton acceptor. Substrate contacts are provided by residues Asn132 and 279 to 282; that span reads HPGV.

This sequence belongs to the NAD(P)-dependent epimerase/dehydratase family. In terms of assembly, homodimer.

It catalyses the reaction UDP-2-acetamido-2,6-dideoxy-beta-L-arabino-hex-4-ulose + NADH + H(+) = UDP-2-acetamido-2,6-dideoxy-beta-L-talose + NAD(+). It carries out the reaction UDP-2-acetamido-2,6-dideoxy-beta-L-arabino-hex-4-ulose + NADPH + H(+) = UDP-2-acetamido-2,6-dideoxy-beta-L-talose + NADP(+). It functions in the pathway bacterial outer membrane biogenesis; LPS O-antigen biosynthesis. Functionally, bifunctional enzyme that mediates C-3 epimerization of the second intermediate followed by reduction at C-4 during serogroup O11 O-antigen biosynthesis, thus catalyzing the conversion of UDP-N-acetyl-D-glucosamine to precursors for the biosynthesis of O antigen. The protein is UDP-2-acetamido-2,6-beta-L-arabino-hexul-4-ose reductase of Pseudomonas aeruginosa (strain ATCC 29260 / BCRC 12902 / CIP 102967 / NCIMB 11965 / PA103).